A 388-amino-acid chain; its full sequence is Mannitol-1-phosphate 5-dehydrogenase (388 aa).

5–16 (AVHFGGGNIGRG) contacts NAD(+). The active site involves lysine 213.

Belongs to the mannitol dehydrogenase family. In terms of assembly, monomer.

It carries out the reaction D-mannitol 1-phosphate + NAD(+) = beta-D-fructose 6-phosphate + NADH + H(+). Catalyzes the NAD(H)-dependent interconversion of D-fructose 6-phosphate and D-mannitol 1-phosphate in the mannitol metabolic pathway. The polypeptide is Mannitol-1-phosphate 5-dehydrogenase (Penicillium rubens (strain ATCC 28089 / DSM 1075 / NRRL 1951 / Wisconsin 54-1255) (Penicillium chrysogenum)).